The primary structure comprises 506 residues: Fe(3+)-transport system permease protein FbpB 2 (506 aa).

12 helical membrane passes run 9 to 29 (LTLL…YVIL), 57 to 77 (LLMV…AFLL), 90 to 110 (VAMT…WISL), 116 to 136 (VFWG…YLPV), 174 to 194 (IGSS…AVSI), 218 to 238 (ALLS…EIFF), 275 to 295 (IFIL…IVGT), 314 to 334 (FIIS…LVWA), 350 to 370 (PYLL…YFSI), 379 to 399 (TFFV…QTTL), 428 to 448 (LTLP…FLNL), and 480 to 500 (AAAT…VFLL). The ABC transmembrane type-1 1 domain occupies 52–233 (LSNTMLLMVC…LMAICILIVF (182 aa)). The 191-residue stretch at 310-500 (FSNSFIISGL…LFSGIPVFLL (191 aa)) folds into the ABC transmembrane type-1 2 domain.

Belongs to the binding-protein-dependent transport system permease family. FbpB subfamily. The complex is composed of two ATP-binding proteins (FbpC), two transmembrane proteins (FbpB) and a solute-binding protein (FbpA).

It is found in the cell inner membrane. Part of the ABC transporter complex FbpABC (TC 3.A.1.10.1) involved in Fe(3+) ions import. Probably responsible for the translocation of the substrate across the membrane. The protein is Fe(3+)-transport system permease protein FbpB 2 (fbpB2) of Haemophilus influenzae (strain ATCC 51907 / DSM 11121 / KW20 / Rd).